The following is a 471-amino-acid chain: Tigger transposable element-derived protein 3 (471 aa).

The HTH psq-type domain maps to Leu-3–Leu-55. 2 DNA-binding regions (H-T-H motif) span residues Gln-31–Asn-51 and Pro-100–Arg-130. Positions Glu-67–Ala-137 constitute an HTH CENPB-type domain. A DDE-1 domain is found at Phe-167–Phe-360.

It belongs to the tigger transposable element derived protein family.

It is found in the nucleus. In Homo sapiens (Human), this protein is Tigger transposable element-derived protein 3 (TIGD3).